A 480-amino-acid chain; its full sequence is Sestrin-2 (480 aa).

M1 is modified (N-acetylmethionine). The disordered stretch occupies residues P20–S45. The interval G66 to S239 is N-terminal domain; mediates the alkylhydroperoxide reductase activity. C125 functions as the Cysteine sulfenic acid (-SOH) intermediate in the catalytic mechanism. Residue K175 forms a Glycyl lysine isopeptide (Lys-Gly) (interchain with G-Cter in ubiquitin) linkage. Disordered regions lie at residues A222–F252 and L272–K291. The residue at position 249 (S249) is a Phosphoserine. Residues P308–T480 are C-terminal domain; mediates TORC1 regulation. Residues T374–T377, T386, and E451 contribute to the L-leucine site.

It belongs to the sestrin family. Interacts with the GATOR2 complex which is composed of MIOS, SEC13, SEH1L, WDR24 and WDR59; the interaction is negatively regulated by leucine. Conveys leucine availability via direct interaction with SEH1L and WDR24 components of the GATOR2 complex. Interacts with RRAGA, RRAGB, RRAGC and RRAGD; may function as a guanine nucleotide dissociation inhibitor for RRAGs and regulate them. May interact with the TORC2 complex. Interacts with KEAP1, RBX1, SQSTM and ULK1; to regulate the degradation of KEAP1. May also associate with the complex composed of TSC1, TSC2 and the AMP-responsive protein kinase/AMPK to regulate TORC1 signaling. May interact with PRDX1. Post-translationally, phosphorylated by ULK1 at multiple sites. In terms of processing, ubiquitinated at Lys-175 by RNF167 via 'Lys-63'-linked polyubiquitination in response to leucine deprivation: ubiquitination promotes SESN2-interaction with the GATOR2 complex, leading to inhibit the TORC1 signaling pathway. Deubiquitinated at Lys-175 by STAMBPL1, promoting the TORC1 signaling pathway. Ubiquitinated by RNF186; ubiquitination mediates proteasomal degradation. Widely expressed.

The protein localises to the cytoplasm. It carries out the reaction a hydroperoxide + L-cysteinyl-[protein] = S-hydroxy-L-cysteinyl-[protein] + an alcohol. Its function is as follows. Functions as an intracellular leucine sensor that negatively regulates the mTORC1 signaling pathway through the GATOR complex. In absence of leucine, binds the GATOR subcomplex GATOR2 and prevents mTORC1 signaling. Binding of leucine to SESN2 disrupts its interaction with GATOR2 thereby activating the TORC1 signaling pathway. This stress-inducible metabolic regulator also plays a role in protection against oxidative and genotoxic stresses. May negatively regulate protein translation in response to endoplasmic reticulum stress, via mTORC1. May positively regulate the transcription by NFE2L2 of genes involved in the response to oxidative stress by facilitating the SQSTM1-mediated autophagic degradation of KEAP1. May also mediate TP53 inhibition of TORC1 signaling upon genotoxic stress. Moreover, may prevent the accumulation of reactive oxygen species (ROS) through the alkylhydroperoxide reductase activity born by the N-terminal domain of the protein. Was originally reported to contribute to oxidative stress resistance by reducing PRDX1. However, this could not be confirmed. This chain is Sestrin-2, found in Homo sapiens (Human).